Reading from the N-terminus, the 559-residue chain is Potassium-transporting ATPase potassium-binding subunit (559 aa).

13 helical membrane passes run 5 to 25 (GFLLIASFLLILLVLAKPLGS), 27 to 47 (LARLIAAVPLPGVAGIERILW), 63 to 83 (LLALLTLNLLGLGILFCLLFW), 132 to 152 (GLTVQNFLSAATGIAVVFALI), 170 to 190 (LVRITLWILFPVALIIALFFI), 253 to 273 (LAQMLAIFLIPAALCFAFGEA), 283 to 303 (LLWAMSFIFVVCVAVVMWAEV), 327 to 347 (FGVLASSLFAVVTTAASCGAV), 356 to 376 (ALGGMVPMWLMQIGEVVFGGV), 379 to 399 (GLYGMLLFVLLAVFIAGLMIG), 416 to 436 (MTALAILVTPMLVLLGSALAM), 484 to 504 (LLAFCMFVGRFGVIIPVMAIA), and 524 to 544 (GALFIGLLIGTVLLVGALTFI).

The protein belongs to the KdpA family. As to quaternary structure, the system is composed of three essential subunits: KdpA, KdpB and KdpC.

It localises to the cell inner membrane. Functionally, part of the high-affinity ATP-driven potassium transport (or Kdp) system, which catalyzes the hydrolysis of ATP coupled with the electrogenic transport of potassium into the cytoplasm. This subunit binds the periplasmic potassium ions and delivers the ions to the membrane domain of KdpB through an intramembrane tunnel. This Salmonella heidelberg (strain SL476) protein is Potassium-transporting ATPase potassium-binding subunit.